The primary structure comprises 287 residues: 26S proteasome non-ATPase regulatory subunit 8 (287 aa).

Position 43 is a phosphoserine (serine 43). The PCI domain maps to 99–268 (PSFERYMAQL…QQKPEDTTIP (170 aa)). Lysine 234 is covalently cross-linked (Glycyl lysine isopeptide (Lys-Gly) (interchain with G-Cter in SUMO2)).

Belongs to the proteasome subunit S14 family. Component of the 19S proteasome regulatory particle complex. The 26S proteasome consists of a 20S core particle (CP) and two 19S regulatory subunits (RP). The regulatory particle is made of a lid composed of 9 subunits including PSMD8, a base containing 6 ATPases and few additional components. Interacts with DDI2. Interacts with TASOR.

Functionally, component of the 26S proteasome, a multiprotein complex involved in the ATP-dependent degradation of ubiquitinated proteins. This complex plays a key role in the maintenance of protein homeostasis by removing misfolded or damaged proteins, which could impair cellular functions, and by removing proteins whose functions are no longer required. Therefore, the proteasome participates in numerous cellular processes, including cell cycle progression, apoptosis, or DNA damage repair. The polypeptide is 26S proteasome non-ATPase regulatory subunit 8 (PSMD8) (Bos taurus (Bovine)).